We begin with the raw amino-acid sequence, 245 residues long: Probable transcriptional regulatory protein TP_0474 (245 aa).

This sequence belongs to the TACO1 family.

It is found in the cytoplasm. This Treponema pallidum (strain Nichols) protein is Probable transcriptional regulatory protein TP_0474.